The primary structure comprises 946 residues: Bifunctional glutamine synthetase adenylyltransferase/adenylyl-removing enzyme (946 aa).

The interval 1 to 440 is adenylyl removase; it reads MKPLSSPLQQ…VFNELIGDDE (440 aa). The segment at 449 to 946 is adenylyl transferase; the sequence is SEQWRELWQD…ASWQKWLVEE (498 aa).

It belongs to the GlnE family. The cofactor is Mg(2+).

The enzyme catalyses [glutamine synthetase]-O(4)-(5'-adenylyl)-L-tyrosine + phosphate = [glutamine synthetase]-L-tyrosine + ADP. The catalysed reaction is [glutamine synthetase]-L-tyrosine + ATP = [glutamine synthetase]-O(4)-(5'-adenylyl)-L-tyrosine + diphosphate. In terms of biological role, involved in the regulation of glutamine synthetase GlnA, a key enzyme in the process to assimilate ammonia. When cellular nitrogen levels are high, the C-terminal adenylyl transferase (AT) inactivates GlnA by covalent transfer of an adenylyl group from ATP to specific tyrosine residue of GlnA, thus reducing its activity. Conversely, when nitrogen levels are low, the N-terminal adenylyl removase (AR) activates GlnA by removing the adenylyl group by phosphorolysis, increasing its activity. The regulatory region of GlnE binds the signal transduction protein PII (GlnB) which indicates the nitrogen status of the cell. The polypeptide is Bifunctional glutamine synthetase adenylyltransferase/adenylyl-removing enzyme (Shigella boydii serotype 4 (strain Sb227)).